Reading from the N-terminus, the 63-residue chain is UPF0512 protein X (63 aa).

This sequence belongs to the UPF0512 family.

This Dictyostelium discoideum (Social amoeba) protein is UPF0512 protein X.